The following is a 380-amino-acid chain: Acetylornithine deacetylase (380 aa).

H79 provides a ligand contact to Zn(2+). The active site involves D81. Zn(2+) is bound at residue D109. E139 is an active-site residue. E140, E164, and H351 together coordinate Zn(2+).

This sequence belongs to the peptidase M20A family. ArgE subfamily. Homodimer. The cofactor is Zn(2+). Requires Co(2+) as cofactor. It depends on glutathione as a cofactor.

The protein localises to the cytoplasm. The enzyme catalyses N(2)-acetyl-L-ornithine + H2O = L-ornithine + acetate. Its pathway is amino-acid biosynthesis; L-arginine biosynthesis; L-ornithine from N(2)-acetyl-L-ornithine (linear): step 1/1. Catalyzes the hydrolysis of the amide bond of N(2)-acetylated L-amino acids. Cleaves the acetyl group from N-acetyl-L-ornithine to form L-ornithine, an intermediate in L-arginine biosynthesis pathway, and a branchpoint in the synthesis of polyamines. The chain is Acetylornithine deacetylase from Myxococcus xanthus.